The sequence spans 290 residues: Arylamine N-acetyltransferase 2 (290 aa).

Cys-68 functions as the Acyl-thioester intermediate in the catalytic mechanism. Residues Thr-103 and Gly-104 each contribute to the CoA site. 106–107 is a binding site for substrate; that stretch reads IH. Residues His-107 and Asp-122 contribute to the active site. Residues Tyr-208, Thr-214, and Ser-287 each contribute to the CoA site.

It belongs to the arylamine N-acetyltransferase family.

It localises to the cytoplasm. The enzyme catalyses an arylamine + acetyl-CoA = an N-acetylarylamine + CoA. It catalyses the reaction an N-hydroxyarylamine + acetyl-CoA = an N-acetoxyarylamine + CoA. Catalyzes the N- or O-acetylation of various arylamine and heterocyclic amine substrates, and participates in the detoxification of a plethora of hydrazine and arylamine drugs. This chain is Arylamine N-acetyltransferase 2 (NAT2), found in Macaca mulatta (Rhesus macaque).